The chain runs to 318 residues: Protein-L-histidine N-pros-methyltransferase (318 aa).

The signal sequence occupies residues 1–18 (MRLLAGWLCLSLASVWLA). An N-linked (GlcNAc...) asparagine glycan is attached at asparagine 35. S-adenosyl-L-homocysteine is bound by residues glutamate 174, asparagine 210, and tyrosine 295.

The protein belongs to the METTL9 family. Expressed in liver, colon, small intestine, skin, kidney and to a lesser extent in spleen, lung, thymus and stomach. Not detected in fibroblast and endothelial cells.

The protein localises to the endoplasmic reticulum. Its subcellular location is the mitochondrion. The enzyme catalyses L-histidyl-[protein] + S-adenosyl-L-methionine = N(pros)-methyl-L-histidyl-[protein] + S-adenosyl-L-homocysteine + H(+). Functionally, protein-histidine N-methyltransferase that specifically catalyzes 1-methylhistidine (pros-methylhistidine) methylation of target proteins. Specifically methylates the second His of proteins with a His-x-His (HxH) motif (where 'x' is preferably a small amino acid), while exploiting the first one as a recognition signature. Catalyzes methylation of target proteins such as S100A9, NDUFB3, SLC39A5, SLC39A7, ARMC6 and DNAJB12; 1-methylhistidine modification may affect the binding of zinc and other metals to its target proteins. Constitutes the main methyltransferase for the 1-methylhistidine modification in cell. In Mus musculus (Mouse), this protein is Protein-L-histidine N-pros-methyltransferase.